A 955-amino-acid polypeptide reads, in one-letter code: GPI inositol-deacylase B (955 aa).

An N-linked (GlcNAc...) asparagine glycan is attached at N7. The chain crosses the membrane as a helical span at residues 8-28 (ASVALWTVFTILTIWISFALH). Residue S180 is part of the active site. N431 carries an N-linked (GlcNAc...) asparagine glycan. Helical transmembrane passes span 489–509 (IAFP…SGGV), 600–620 (LLFS…FWRY), 643–663 (YLSW…FEFI), and 703–723 (PIGV…VVVV). An N-linked (GlcNAc...) asparagine glycan is attached at N753. A run of 3 helical transmembrane segments spans residues 772 to 792 (VIIA…LAFA), 840 to 860 (TMSV…AVWV), and 870 to 890 (IFSS…IENL). N-linked (GlcNAc...) asparagine glycosylation is present at N914. Residues 919–939 (GMMHAFMIHHWFNLLAGWLLI) traverse the membrane as a helical segment. N-linked (GlcNAc...) asparagine glycosylation is present at N945.

This sequence belongs to the GPI inositol-deacylase family.

It is found in the endoplasmic reticulum membrane. Involved in inositol deacylation of GPI-anchored proteins which plays important roles in the quality control and ER-associated degradation of GPI-anchored proteins. The protein is GPI inositol-deacylase B (BST1B) of Yarrowia lipolytica (strain CLIB 122 / E 150) (Yeast).